A 75-amino-acid polypeptide reads, in one-letter code: ATP synthase subunit c (75 aa).

Helical transmembrane passes span 9–29 (IGAG…GIIF) and 54–74 (FALA…ILFA).

Belongs to the ATPase C chain family. F-type ATPases have 2 components, F(1) - the catalytic core - and F(0) - the membrane proton channel. F(1) has five subunits: alpha(3), beta(3), gamma(1), delta(1), epsilon(1). F(0) has three main subunits: a(1), b(2) and c(10-14). The alpha and beta chains form an alternating ring which encloses part of the gamma chain. F(1) is attached to F(0) by a central stalk formed by the gamma and epsilon chains, while a peripheral stalk is formed by the delta and b chains.

It localises to the cell inner membrane. In terms of biological role, f(1)F(0) ATP synthase produces ATP from ADP in the presence of a proton or sodium gradient. F-type ATPases consist of two structural domains, F(1) containing the extramembraneous catalytic core and F(0) containing the membrane proton channel, linked together by a central stalk and a peripheral stalk. During catalysis, ATP synthesis in the catalytic domain of F(1) is coupled via a rotary mechanism of the central stalk subunits to proton translocation. Key component of the F(0) channel; it plays a direct role in translocation across the membrane. A homomeric c-ring of between 10-14 subunits forms the central stalk rotor element with the F(1) delta and epsilon subunits. This chain is ATP synthase subunit c, found in Pelagibacter ubique (strain HTCC1062).